Reading from the N-terminus, the 233-residue chain is AA9 family lytic polysaccharide monooxygenase A (233 aa).

The N-terminal stretch at 1–17 (MKLTTSVALLAAAGAQA) is a signal peptide. Cu(2+) is bound by residues His-18 and His-90. 2 disulfides stabilise this stretch: Cys-59/Cys-180 and Cys-150/Cys-233. An N-linked (GlcNAc...) asparagine glycan is attached at Asn-132. Residues His-166 and Gln-175 each contribute to the O2 site. Residue Tyr-177 participates in Cu(2+) binding.

The protein belongs to the polysaccharide monooxygenase AA9 family. The cofactor is Cu(2+).

The protein localises to the secreted. It catalyses the reaction [(1-&gt;4)-beta-D-glucosyl]n+m + reduced acceptor + O2 = 4-dehydro-beta-D-glucosyl-[(1-&gt;4)-beta-D-glucosyl]n-1 + [(1-&gt;4)-beta-D-glucosyl]m + acceptor + H2O.. In terms of biological role, lytic polysaccharide monooxygenase (LPMO) that depolymerizes crystalline and amorphous polysaccharides via the oxidation of scissile alpha- or beta-(1-4)-glycosidic bonds, yielding C1 and C4 oxidation products. Catalysis by LPMOs requires the reduction of the active-site copper from Cu(II) to Cu(I) by a reducing agent and H(2)O(2) or O(2) as a cosubstrate. Shows endoglucanase activity on tamarind xyloglucan, as well as on beechwood xylan when combined with phosphoric acid swollen cellulose (PASC). Shows no activity on wheat arabinoxylan, konjac glucomannan, acetylated spruce galactoglucomannan, or cellopentaose. In Thermothielavioides terrestris (strain ATCC 38088 / NRRL 8126) (Thielavia terrestris), this protein is AA9 family lytic polysaccharide monooxygenase A.